The primary structure comprises 240 residues: Pyridoxine 5'-phosphate synthase (240 aa).

Asn-7 is a 3-amino-2-oxopropyl phosphate binding site. 9-10 (DH) serves as a coordination point for 1-deoxy-D-xylulose 5-phosphate. 3-amino-2-oxopropyl phosphate is bound at residue Arg-18. The Proton acceptor role is filled by His-43. Arg-45 and His-50 together coordinate 1-deoxy-D-xylulose 5-phosphate. Residue Glu-70 is the Proton acceptor of the active site. Residue Thr-100 participates in 1-deoxy-D-xylulose 5-phosphate binding. His-191 acts as the Proton donor in catalysis. Residues Gly-192 and 213 to 214 (GH) contribute to the 3-amino-2-oxopropyl phosphate site.

The protein belongs to the PNP synthase family. In terms of assembly, homooctamer; tetramer of dimers.

The protein resides in the cytoplasm. The catalysed reaction is 3-amino-2-oxopropyl phosphate + 1-deoxy-D-xylulose 5-phosphate = pyridoxine 5'-phosphate + phosphate + 2 H2O + H(+). The protein operates within cofactor biosynthesis; pyridoxine 5'-phosphate biosynthesis; pyridoxine 5'-phosphate from D-erythrose 4-phosphate: step 5/5. Functionally, catalyzes the complicated ring closure reaction between the two acyclic compounds 1-deoxy-D-xylulose-5-phosphate (DXP) and 3-amino-2-oxopropyl phosphate (1-amino-acetone-3-phosphate or AAP) to form pyridoxine 5'-phosphate (PNP) and inorganic phosphate. The polypeptide is Pyridoxine 5'-phosphate synthase (Coxiella burnetii (strain Dugway 5J108-111)).